The chain runs to 776 residues: DNA ligase (776 aa).

Residues 31-35, 80-81, and E112 contribute to the NAD(+) site; these read DAEYD and SL. The active-site N6-AMP-lysine intermediate is K114. Residues R135, E172, K288, and K312 each contribute to the NAD(+) site. Zn(2+)-binding residues include C406, C409, C436, and C442. The BRCT domain occupies 693-776; the sequence is AEGLPLAGQT…VFLDEQGIAI (84 aa).

This sequence belongs to the NAD-dependent DNA ligase family. LigA subfamily. Requires Mg(2+) as cofactor. It depends on Mn(2+) as a cofactor.

It catalyses the reaction NAD(+) + (deoxyribonucleotide)n-3'-hydroxyl + 5'-phospho-(deoxyribonucleotide)m = (deoxyribonucleotide)n+m + AMP + beta-nicotinamide D-nucleotide.. Its function is as follows. DNA ligase that catalyzes the formation of phosphodiester linkages between 5'-phosphoryl and 3'-hydroxyl groups in double-stranded DNA using NAD as a coenzyme and as the energy source for the reaction. It is essential for DNA replication and repair of damaged DNA. The chain is DNA ligase from Pseudomonas putida (strain W619).